The chain runs to 141 residues: uncharacterized protein (141 aa).

The HTH marR-type domain maps to 4-139; it reads RTQMMYDMET…LIELFSKLDK (136 aa). A DNA-binding region (H-T-H motif) is located at residues 53–76; sequence VTEFAPILEVSASHITAVTDALVE.

This is an uncharacterized protein from Bacillus subtilis (strain 168).